A 538-amino-acid chain; its full sequence is [Pyruvate dehydrogenase [acetyl-transferring]]-phosphatase 1, mitochondrial (538 aa).

A mitochondrion-targeting transit peptide spans Met1–Tyr71. The 417-residue stretch at Val109 to Phe525 folds into the PPM-type phosphatase domain. Mn(2+) contacts are provided by Asp144 and Gly145. N6-acetyllysine is present on Lys202. Residues Asp418 and Asp516 each coordinate Mn(2+).

This sequence belongs to the PP2C family. Heterodimer of a catalytic (PDP1) and a regulatory (PDPR) subunit. Mn(2+) is required as a cofactor. Requires Mg(2+) as cofactor.

Its subcellular location is the mitochondrion. It carries out the reaction O-phospho-L-seryl-[pyruvate dehydrogenase E1 alpha subunit] + H2O = L-seryl-[pyruvate dehydrogenase E1 alpha subunit] + phosphate. Magnesium-dependent and calcium-stimulated. PDP1 activity strongly depends on its Ca(2+)-dependent binding to the lipoyl domain of E2 subunit of component of the pyruvate dehydrogenase complex. Its function is as follows. Mitochondrial enzyme that catalyzes the dephosphorylation and concomitant reactivation of the alpha subunit of the E1 component of the pyruvate dehydrogenase complex (PDC), thereby stimulating the conversion of pyruvate into acetyl-CoA. The chain is [Pyruvate dehydrogenase [acetyl-transferring]]-phosphatase 1, mitochondrial (PDP1) from Bos taurus (Bovine).